The sequence spans 536 residues: CTP synthase (536 aa).

The segment at 1 to 267 (MSKFVFVTGG…CKETLNYLEL (267 aa)) is amidoligase domain. S13 is a binding site for CTP. S13 contacts UTP. Residues 14–19 (SIGKGI) and D71 each bind ATP. D71 and E141 together coordinate Mg(2+). CTP-binding positions include 148–150 (DIE), 188–193 (KTKPTQ), and K224. UTP-binding positions include 188–193 (KTKPTQ) and K224. The 243-residue stretch at 292 to 534 (KVALVGKYIE…IKASQDKLTQ (243 aa)) folds into the Glutamine amidotransferase type-1 domain. Residue G354 coordinates L-glutamine. The active-site Nucleophile; for glutamine hydrolysis is the C381. L-glutamine is bound by residues 382–385 (LGMQ), E405, and R462. Residues H507 and E509 contribute to the active site.

It belongs to the CTP synthase family. In terms of assembly, homotetramer.

The enzyme catalyses UTP + L-glutamine + ATP + H2O = CTP + L-glutamate + ADP + phosphate + 2 H(+). It catalyses the reaction L-glutamine + H2O = L-glutamate + NH4(+). The catalysed reaction is UTP + NH4(+) + ATP = CTP + ADP + phosphate + 2 H(+). Its pathway is pyrimidine metabolism; CTP biosynthesis via de novo pathway; CTP from UDP: step 2/2. With respect to regulation, allosterically activated by GTP, when glutamine is the substrate; GTP has no effect on the reaction when ammonia is the substrate. The allosteric effector GTP functions by stabilizing the protein conformation that binds the tetrahedral intermediate(s) formed during glutamine hydrolysis. Inhibited by the product CTP, via allosteric rather than competitive inhibition. Catalyzes the ATP-dependent amination of UTP to CTP with either L-glutamine or ammonia as the source of nitrogen. Regulates intracellular CTP levels through interactions with the four ribonucleotide triphosphates. This Prochlorococcus marinus (strain MIT 9301) protein is CTP synthase.